A 121-amino-acid chain; its full sequence is Flagellar protein FliT (121 aa).

Residues 1–50 form a required for homodimerization region; the sequence is MNHAPHLYFAWQQLVEKSQLMLRLATEEQWDELIASEMAYVNAVQEIAHL. The segment at 60–98 is fliD binding; sequence MQEQLRPMLRLILDNESKVKQLLQIRMDELAKLVGQSSV.

Belongs to the FliT family. As to quaternary structure, homodimer. Interacts with FliD and FlhC.

The protein localises to the cytoplasm. It localises to the cytosol. Functionally, dual-function protein that regulates the transcription of class 2 flagellar operons and that also acts as an export chaperone for the filament-capping protein FliD. As a transcriptional regulator, acts as an anti-FlhDC factor; it directly binds FlhC, thus inhibiting the binding of the FlhC/FlhD complex to class 2 promoters, resulting in decreased expression of class 2 flagellar operons. As a chaperone, effects FliD transition to the membrane by preventing its premature polymerization, and by directing it to the export apparatus. The protein is Flagellar protein FliT of Escherichia coli O139:H28 (strain E24377A / ETEC).